Here is a 163-residue protein sequence, read N- to C-terminus: ATP synthase subunit b 2 (163 aa).

Residues 5–25 form a helical membrane-spanning segment; the sequence is SLATLWATIALIIFLGVAIYI.

It belongs to the ATPase B chain family. In terms of assembly, F-type ATPases have 2 components, F(1) - the catalytic core - and F(0) - the membrane proton channel. F(1) has five subunits: alpha(3), beta(3), gamma(1), delta(1), epsilon(1). F(0) has three main subunits: a(1), b(2) and c(10-14). The alpha and beta chains form an alternating ring which encloses part of the gamma chain. F(1) is attached to F(0) by a central stalk formed by the gamma and epsilon chains, while a peripheral stalk is formed by the delta and b chains.

It is found in the cell inner membrane. Functionally, f(1)F(0) ATP synthase produces ATP from ADP in the presence of a proton or sodium gradient. F-type ATPases consist of two structural domains, F(1) containing the extramembraneous catalytic core and F(0) containing the membrane proton channel, linked together by a central stalk and a peripheral stalk. During catalysis, ATP synthesis in the catalytic domain of F(1) is coupled via a rotary mechanism of the central stalk subunits to proton translocation. Its function is as follows. Component of the F(0) channel, it forms part of the peripheral stalk, linking F(1) to F(0). The protein is ATP synthase subunit b 2 of Mesorhizobium japonicum (strain LMG 29417 / CECT 9101 / MAFF 303099) (Mesorhizobium loti (strain MAFF 303099)).